Here is a 277-residue protein sequence, read N- to C-terminus: Shikimate dehydrogenase (NADP(+)) (277 aa).

Residues 15–17 and threonine 62 each bind shikimate; that span reads SLS. The active-site Proton acceptor is the lysine 66. Shikimate contacts are provided by asparagine 87 and aspartate 102. NADP(+) contacts are provided by residues 127–131, 151–156, and isoleucine 219; these read GAGGA and NRTVDK. Tyrosine 221 is a shikimate binding site. Glycine 242 lines the NADP(+) pocket.

It belongs to the shikimate dehydrogenase family. Homodimer.

It catalyses the reaction shikimate + NADP(+) = 3-dehydroshikimate + NADPH + H(+). It functions in the pathway metabolic intermediate biosynthesis; chorismate biosynthesis; chorismate from D-erythrose 4-phosphate and phosphoenolpyruvate: step 4/7. Involved in the biosynthesis of the chorismate, which leads to the biosynthesis of aromatic amino acids. Catalyzes the reversible NADPH linked reduction of 3-dehydroshikimate (DHSA) to yield shikimate (SA). This is Shikimate dehydrogenase (NADP(+)) from Bacillus cereus (strain AH820).